The sequence spans 1050 residues: Transcription intermediary factor 1-alpha (1050 aa).

Lys-7 is covalently cross-linked (Glycyl lysine isopeptide (Lys-Gly) (interchain with G-Cter in SUMO2)). Low complexity predominate over residues 15-30; it reads ASAAASGGPSAAPSGE. Residues 15–44 form a disordered region; it reads ASAAASGGPSAAPSGENEAESRQGPDSERG. Residues 33–44 show a composition bias toward basic and acidic residues; the sequence is AESRQGPDSERG. The segment at 56–82 adopts an RING-type zinc-finger fold; it reads CAVCHQNIQSRAPKLLPCLHSFCQRCL. Thr-101 is subject to Phosphothreonine. Ser-110 carries the phosphoserine modification. B box-type zinc fingers lie at residues 158 to 211 and 218 to 259; these read KSNQ…VSPE and QRPV…YQFI. Residues Cys-163, Cys-166, Cys-187, and His-200 each contribute to the Zn(2+) site. Lys-205 is covalently cross-linked (Glycyl lysine isopeptide (Lys-Gly) (interchain with G-Cter in SUMO2)). Zn(2+)-binding residues include Cys-223, His-226, Cys-246, and His-251. Residue Lys-276 forms a Glycyl lysine isopeptide (Lys-Gly) (interchain with G-Cter in SUMO2) linkage. The stretch at 289-359 forms a coiled coil; sequence NQIQNRIIEV…AGLSKQLEHV (71 aa). Positions 429–456 are disordered; the sequence is ESQPQMPKQNPVVEQNSQPPSGLSSNQL. Positions 431–456 are enriched in polar residues; the sequence is QPQMPKQNPVVEQNSQPPSGLSSNQL. Residues Lys-436 and Lys-458 each participate in a glycyl lysine isopeptide (Lys-Gly) (interchain with G-Cter in SUMO2) cross-link. Arg-469 is subject to Omega-N-methylarginine. Low complexity-rich tracts occupy residues 476–490 and 499–510; these read QVMA…RPAP and QGPIQQPSISHQ. The disordered stretch occupies residues 476–550; it reads QVMAQRQQVQ…PPNQNIPRQA (75 aa). The span at 526 to 535 shows a compositional bias: pro residues; that stretch reads PNGPVLPPHP. A Glycyl lysine isopeptide (Lys-Gly) (interchain with G-Cter in SUMO2) cross-link involves residue Lys-552. The segment at 571 to 594 is disordered; the sequence is ISSGQGTPSTTNSTSSTPSSPTIT. The segment covering 577 to 594 has biased composition (low complexity); that stretch reads TPSTTNSTSSTPSSPTIT. Lys-641 participates in a covalent cross-link: Glycyl lysine isopeptide (Lys-Gly) (interchain with G-Cter in SUMO2). Residues 643–712 are disordered; it reads TNIDHGQPRP…PAGADSTHKV (70 aa). A phosphoserine mark is found at Ser-654, Ser-660, and Ser-667. Residues 654-666 show a composition bias toward polar residues; sequence SNRTVQSPNSSVP. The span at 685–707 shows a compositional bias: low complexity; it reads SPSASSVGSRGSSGSSSKPAGAD. Residues Lys-702 and Lys-711 each participate in a glycyl lysine isopeptide (Lys-Gly) (interchain with G-Cter in SUMO2) cross-link. A Glycyl lysine isopeptide (Lys-Gly) (interchain with G-Cter in SUMO1); alternate cross-link involves residue Lys-723. A Glycyl lysine isopeptide (Lys-Gly) (interchain with G-Cter in SUMO2); alternate cross-link involves residue Lys-723. Lys-741 participates in a covalent cross-link: Glycyl lysine isopeptide (Lys-Gly) (interchain with G-Cter in SUMO2). Ser-744 carries the post-translational modification Phosphoserine. Residues 754–779 are nuclear receptor binding site (NRBS); that stretch reads NYPRSILTSLLLNSSQSSTSEETVLR. Positions 766–824 are disordered; that stretch reads NSSQSSTSEETVLRSDAPDSTGDQPGLHQDNSSNGKSEWLDPSQKSPLHVGETRKEDDP. Ser-768 bears the Phosphoserine; by ATM mark. Lys-801 participates in a covalent cross-link: Glycyl lysine isopeptide (Lys-Gly) (interchain with G-Cter in SUMO2). Ser-808 is subject to Phosphoserine. Residue Lys-810 forms a Glycyl lysine isopeptide (Lys-Gly) (interchain with G-Cter in SUMO2) linkage. A Phosphoserine modification is found at Ser-811. Thr-818 carries the post-translational modification Phosphothreonine. The PHD-type zinc finger occupies 826–873; that stretch reads EDWCAVCQNGGELLCCEKCPKVFHLSCHVPTLTNFPSGEWICTFCRDL. Residues 834-840 are interaction with histone H3 that is not methylated at 'Lys-4' (H3K4me0); the sequence is NGGELLC. Lys-875 is covalently cross-linked (Glycyl lysine isopeptide (Lys-Gly) (interchain with G-Cter in SUMO2)). The Nuclear localization signal signature appears at 891–907; it reads KKKTEGLVKLTPIDKRK. The Bromo domain maps to 899 to 1004; that stretch reads KLTPIDKRKC…NYFEELLKNL (106 aa). Lys-949 is covalently cross-linked (Glycyl lysine isopeptide (Lys-Gly) (interchain with G-Cter in SUMO2)). The interaction with histone H3 that is acetylated at 'Lys-23' (H3K23ac) stretch occupies residues 979-980; sequence FN. Residue Lys-992 forms a Glycyl lysine isopeptide (Lys-Gly) (interchain with G-Cter in SUMO2) linkage. A compositionally biased stretch (basic and acidic residues) spans 1011–1026; that stretch reads PKPEFRNESEDNKFSD. Positions 1011 to 1036 are disordered; the sequence is PKPEFRNESEDNKFSDDSDDDFVQPR. 3 positions are modified to phosphoserine: Ser-1019, Ser-1025, and Ser-1028. Lys-1041 participates in a covalent cross-link: Glycyl lysine isopeptide (Lys-Gly) (interchain with G-Cter in SUMO2). Phosphoserine is present on Ser-1042.

In terms of assembly, interacts with CARM1, NCOA2/GRIP1, PML, KAT5/TIP60, BRD7, CBX1, CBX3 and CBX5. Part of a coactivator complex containing TRIM24, NCOA2 and CARM1. Interacts with NR3C2/MCR. Interacts with the ligand-binding domain of estrogen receptors (in vitro). Interaction with DNA-bound estrogen receptors requires the presence of estradiol. Interacts with AR and p53/TP53. Interacts (via bromo domain) with histone H3 (via N-terminus), provided that it is not methylated at 'Lys-4' (H3K4me0). Does not interact with histone H3 that is methylated at 'Lys-4' (H3K4me1, H3K4me2 or H3K4me3). Interacts (via bromo domain) with histone H3 (via N-terminus) that is acetylated at 'Lys-23' (H3K23ac). Has the highest affinity for histone H3 that is both unmodified at 'Lys-4' (H3K4me0) and acetylated at 'Lys-23' (H3K23ac). Has very low affinity for histone H3 that is methylated at 'Lys-9' (H3K9me), or acetylated at both 'Lys-9' (H3K9ac) and 'Lys-14' (H3K14ac), or acetylated at 'Lys-27' (H3K27ac) (in vitro). Interacts with TRIM16. Phosphorylated at Ser-768 by ATM kinase induces ubiquitination and degradation during DNA damage. In terms of processing, sumoylated. Post-translationally, undergoes ubiquitination-mediated degradation in response to DNA damage.

The protein localises to the nucleus. It localises to the cytoplasm. Its subcellular location is the mitochondrion. It catalyses the reaction S-ubiquitinyl-[E2 ubiquitin-conjugating enzyme]-L-cysteine + [acceptor protein]-L-lysine = [E2 ubiquitin-conjugating enzyme]-L-cysteine + N(6)-ubiquitinyl-[acceptor protein]-L-lysine.. It participates in protein modification; protein ubiquitination. Its function is as follows. Transcriptional coactivator that interacts with numerous nuclear receptors and coactivators and modulates the transcription of target genes. Interacts with chromatin depending on histone H3 modifications, having the highest affinity for histone H3 that is both unmodified at 'Lys-4' (H3K4me0) and acetylated at 'Lys-23' (H3K23ac). Has E3 protein-ubiquitin ligase activity. During the DNA damage response, participates in an autoregulatory feedback loop with TP53. Early in response to DNA damage, ATM kinase phosphorylates TRIM24 leading to its ubiquitination and degradation. After sufficient DNA repair has occurred, TP53 activates TRIM24 transcription, ultimately leading to TRIM24-mediated TP53 ubiquitination and degradation. Plays a role in the regulation of cell proliferation and apoptosis, at least in part via its effects on p53/TP53 levels. Up-regulates ligand-dependent transcription activation by AR, GCR/NR3C1, thyroid hormone receptor (TR) and ESR1. Modulates transcription activation by retinoic acid (RA) receptors, including RARA. Plays a role in regulating retinoic acid-dependent proliferation of hepatocytes. Also participates in innate immunity by mediating the specific 'Lys-63'-linked ubiquitination of TRAF3 leading to activation of downstream signal transduction of the type I IFN pathway. Additionally, negatively regulates NLRP3/CASP1/IL-1beta-mediated pyroptosis and cell migration probably by ubiquitinating NLRP3. This is Transcription intermediary factor 1-alpha (TRIM24) from Homo sapiens (Human).